Here is a 397-residue protein sequence, read N- to C-terminus: 1-deoxy-D-xylulose 5-phosphate reductoisomerase (397 aa).

Thr12, Gly13, Ser14, Ile15, Gly38, Lys39, Asn40, and Asn126 together coordinate NADPH. Lys127 contacts 1-deoxy-D-xylulose 5-phosphate. An NADPH-binding site is contributed by Glu128. Asp152 contacts Mn(2+). The 1-deoxy-D-xylulose 5-phosphate site is built by Ser153, Glu154, Ser188, and His211. Glu154 serves as a coordination point for Mn(2+). Gly217 is a binding site for NADPH. 4 residues coordinate 1-deoxy-D-xylulose 5-phosphate: Ser224, Asn229, Lys230, and Glu233. Glu233 lines the Mn(2+) pocket.

Belongs to the DXR family. It depends on Mg(2+) as a cofactor. Mn(2+) is required as a cofactor.

The enzyme catalyses 2-C-methyl-D-erythritol 4-phosphate + NADP(+) = 1-deoxy-D-xylulose 5-phosphate + NADPH + H(+). It participates in isoprenoid biosynthesis; isopentenyl diphosphate biosynthesis via DXP pathway; isopentenyl diphosphate from 1-deoxy-D-xylulose 5-phosphate: step 1/6. Its function is as follows. Catalyzes the NADPH-dependent rearrangement and reduction of 1-deoxy-D-xylulose-5-phosphate (DXP) to 2-C-methyl-D-erythritol 4-phosphate (MEP). The polypeptide is 1-deoxy-D-xylulose 5-phosphate reductoisomerase (Haemophilus influenzae (strain PittEE)).